The sequence spans 109 residues: MKLSIIIIATSLVIAVVAFPSKDSKAIENDKTEQRMEIVVQETARACSKQIGDKCKRNCECCGKTVVCGTIYVGGKEVNQCMDKTSDNAILNGLGKGMNFMENTFSFCV.

Residues 1-18 (MKLSIIIIATSLVIAVVA) form the signal peptide. Residues 19–46 (FPSKDSKAIENDKTEQRMEIVVQETARA) constitute a propeptide that is removed on maturation. 4 disulfides stabilise this stretch: cysteine 47–cysteine 62, cysteine 55–cysteine 68, cysteine 59–cysteine 108, and cysteine 61–cysteine 81.

Belongs to the neurotoxin 25 family. F7 subfamily. As to expression, expressed by the venom gland.

The protein resides in the secreted. Its function is as follows. Putative ion channel inhibitor. In Cyriopagopus hainanus (Chinese bird spider), this protein is Hainantoxin-XVIII-7.